The following is a 353-amino-acid chain: S-adenosylmethionine decarboxylase proenzyme (353 aa).

Active-site residues include Glu9 and Glu12. Ser69 acts as the Schiff-base intermediate with substrate; via pyruvic acid in catalysis. At Ser69 the chain carries Pyruvic acid (Ser); by autocatalysis. Cys83 functions as the Proton donor; for catalytic activity in the catalytic mechanism. Catalysis depends on proton acceptor; for processing activity residues Ser232 and His245.

This sequence belongs to the eukaryotic AdoMetDC family. Requires pyruvate as cofactor. Is synthesized initially as an inactive proenzyme. Formation of the active enzyme involves a self-maturation process in which the active site pyruvoyl group is generated from an internal serine residue via an autocatalytic post-translational modification. Two non-identical subunits are generated from the proenzyme in this reaction, and the pyruvate is formed at the N-terminus of the alpha chain, which is derived from the carboxyl end of the proenzyme. The post-translation cleavage follows an unusual pathway, termed non-hydrolytic serinolysis, in which the side chain hydroxyl group of the serine supplies its oxygen atom to form the C-terminus of the beta chain, while the remainder of the serine residue undergoes an oxidative deamination to produce ammonia and the pyruvoyl group blocking the N-terminus of the alpha chain.

The catalysed reaction is S-adenosyl-L-methionine + H(+) = S-adenosyl 3-(methylsulfanyl)propylamine + CO2. It functions in the pathway amine and polyamine biosynthesis; S-adenosylmethioninamine biosynthesis; S-adenosylmethioninamine from S-adenosyl-L-methionine: step 1/1. In Vicia faba (Broad bean), this protein is S-adenosylmethionine decarboxylase proenzyme (SAMDC).